Here is a 148-residue protein sequence, read N- to C-terminus: Cytochrome c oxidase subunit 6, mitochondrial (148 aa).

Residues 1–40 (MASFFRTAVRGPSAGLFRAVARPQPIAARVSLFSTSSRFR) constitute a mitochondrion transit peptide.

This sequence belongs to the cytochrome c oxidase subunit 5A family. As to quaternary structure, component of the cytochrome c oxidase (complex IV, CIV), a multisubunit enzyme composed of 11 subunits. The complex is composed of a catalytic core of 3 subunits Cox1, Cox2 and Cox3, encoded in the mitochondrial DNA, and 8 supernumerary subunits Cox4, Cox5a/Cox5, Cox6, Cox7, Cox8, Cox7a/Cox9, Cox6b/Cox12 and Cox6a/Cox13, which are encoded in the nuclear genome. The complex exists as a monomer or a dimer and forms respiratory supercomplexes (SCs) in the inner mitochondrial membrane with NADH-ubiquinone oxidoreductase (complex I, CI) and ubiquinol-cytochrome c oxidoreductase (cytochrome b-c1 complex, complex III, CIII), resulting in various different assemblies (supercomplexes I(1)IV(1), I(1)III(3)IV(2), III(2)IV(1) and III(2)IV(2) as well as larger supercomplexes of compositions like I(1)III(2)IV(5-6)).

The protein localises to the mitochondrion inner membrane. The protein operates within energy metabolism; oxidative phosphorylation. Its function is as follows. Component of the cytochrome c oxidase, the last enzyme in the mitochondrial electron transport chain which drives oxidative phosphorylation. The respiratory chain contains 3 multisubunit complexes succinate dehydrogenase (complex II, CII), ubiquinol-cytochrome c oxidoreductase (cytochrome b-c1 complex, complex III, CIII) and cytochrome c oxidase (complex IV, CIV), that cooperate to transfer electrons derived from NADH and succinate to molecular oxygen, creating an electrochemical gradient over the inner membrane that drives transmembrane transport and the ATP synthase. Cytochrome c oxidase is the component of the respiratory chain that catalyzes the reduction of oxygen to water. Electrons originating from reduced cytochrome c in the intermembrane space (IMS) are transferred via the dinuclear copper A center (CU(A)) of Cox2 and heme A of Cox1 to the active site in Cox1, a binuclear center (BNC) formed by heme A3 and copper B (CU(B)). The BNC reduces molecular oxygen to 2 water molecules using 4 electrons from cytochrome c in the IMS and 4 protons from the mitochondrial matrix. The protein is Cytochrome c oxidase subunit 6, mitochondrial (cox-6) of Neurospora crassa (strain ATCC 24698 / 74-OR23-1A / CBS 708.71 / DSM 1257 / FGSC 987).